We begin with the raw amino-acid sequence, 176 residues long: Membrane-anchored junction protein (176 aa).

At 1-151 (MSLKPFTYPF…QHNSPPPKER (151 aa)) the chain is on the nuclear side. The interval 59-150 (AVMRKRKHMD…LQHNSPPPKE (92 aa)) is disordered. The segment covering 95-107 (PPVETRRNRERKT) has biased composition (basic and acidic residues). Polar residues predominate over residues 108-120 (QQGLQETLASDIT). Residues 152–170 (AATGFFGFLSSLFPFRYFF) traverse the membrane as a helical segment. Over 171–176 (RKSSHS) the chain is Perinuclear space.

It belongs to the MAJIN family. In terms of assembly, component of the MAJIN-TERB1-TERB2 complex, composed of MAJIN, TERB1 and TERB2.

It localises to the nucleus inner membrane. It is found in the chromosome. The protein localises to the telomere. In terms of biological role, meiosis-specific telomere-associated protein involved in meiotic telomere attachment to the nucleus inner membrane, a crucial step for homologous pairing and synapsis. Component of the MAJIN-TERB1-TERB2 complex, which promotes telomere cap exchange by mediating attachment of telomeric DNA to the inner nuclear membrane and replacement of the protective cap of telomeric chromosomes: in early meiosis, the MAJIN-TERB1-TERB2 complex associates with telomeric DNA and the shelterin/telosome complex. During prophase, the complex matures and promotes release of the shelterin/telosome complex from telomeric DNA. In the complex, MAJIN acts as the anchoring subunit to the nucleus inner membrane. MAJIN shows DNA-binding activity, possibly for the stabilization of telomere attachment on the nucleus inner membrane. The chain is Membrane-anchored junction protein from Homo sapiens (Human).